Reading from the N-terminus, the 262-residue chain is Small ribosomal subunit protein eS1 (262 aa).

Residues 235 to 253 (HGDGKGSDEPGAKVSRPEA) are compositionally biased toward basic and acidic residues. The interval 235-262 (HGDGKGSDEPGAKVSRPEAYEPPVQESV) is disordered.

The protein belongs to the eukaryotic ribosomal protein eS1 family. Component of the small ribosomal subunit. Mature ribosomes consist of a small (40S) and a large (60S) subunit. The 40S subunit contains about 33 different proteins and 1 molecule of RNA (18S). The 60S subunit contains about 49 different proteins and 3 molecules of RNA (28S, 5.8S and 5S).

It is found in the cytoplasm. In Triatoma infestans (Assassin bug), this protein is Small ribosomal subunit protein eS1.